The primary structure comprises 508 residues: MSRPGPSAPRQLTLTEELEKLEQQITLTLQEIDSNFAKAHRIVTTSILPLVEQYGEHSRAVWEATKFWKQFFEASANVSLSGYEELVDGGETSPAEETAHDQEEEQTTAIHDHTQEPSQYTPRPQTSAGGHDTTTLSSVDDQSSVLYDRSRAAQQQPAQLQHHDDSSVLTDRDGDLAGSTPHAPPRGIKIEQQQQPQPAGDEMDIDMDEEDSELIFQQHTTRLLGETSRYYDDDHGFEQGEEEEDEEEEEEEEEEEEGGGGGEVGDDSVLGARSRSKNPVLHRMQNKTYRIMATPHKGISAVKPNTTSNRGVSPVRWKIQPTTPKIKQEDTEKKRPLWEDSPSSSPEPAPPQLRSAAFMSPMRLAYGGPKTSEKLQAAAKAIAAPRTPGVSVQTPAVGRKTKDVFGGVGMQSATKAIVDAKAAAKEKRKSILEEITWESDEDLGVSPPKTIQFAVPASRLMQTPAREASRRIVDDLLLTAGGGDLIEGSSEYSPSVVKMNQDIMDESF.

Disordered regions lie at residues 86-138 (LVDG…TLSS) and 150-355 (SRAA…QLRS). The span at 116-138 (EPSQYTPRPQTSAGGHDTTTLSS) shows a compositional bias: polar residues. Residues 161 to 175 (QHHDDSSVLTDRDGD) are compositionally biased toward basic and acidic residues. The segment covering 201–213 (DEMDIDMDEEDSE) has biased composition (acidic residues). Residues 229-238 (RYYDDDHGFE) are compositionally biased toward basic and acidic residues. Residues 239-258 (QGEEEEDEEEEEEEEEEEEG) show a composition bias toward acidic residues. Residues 326-338 (IKQEDTEKKRPLW) are compositionally biased toward basic and acidic residues.

This sequence belongs to the DASH complex ASK1 family. As to quaternary structure, component of the DASH complex consisting of ASK1, DAD1, DAD2, DAD3, DAD4, DAM1, DUO1, HSK3, SPC19 and SPC34, with a stoichiometry of one copy of each subunit per complex. Multiple DASH complexes oligomerize to form a ring that encircles spindle microtubules and organizes the rod-like NDC80 complexes of the outer kinetochore. On cytoplasmic microtubules, DASH complexes appear to form patches instead of rings.

Its subcellular location is the chromosome. The protein localises to the centromere. It localises to the kinetochore. It is found in the cytoplasm. The protein resides in the cytoskeleton. Its subcellular location is the spindle. The protein localises to the nucleus. In terms of biological role, component of the DASH complex that connects microtubules with kinetochores and couples microtubule depolymerisation to chromosome movement; it is involved in retrieving kinetochores to the spindle poles before their re-orientation on the spindle in early mitosis and allows microtubule depolymerization to pull chromosomes apart and resist detachment during anaphase. Kinetochores, consisting of a centromere-associated inner segment and a microtubule-contacting outer segment, play a crucial role in chromosome segregation by mediating the physical connection between centromeric DNA and microtubules. Kinetochores also serve as an input point for the spindle assembly checkpoint, which delays anaphase until all chromosomes have bioriented on the mitotic spindle. The polypeptide is DASH complex subunit ASK1 (Chaetomium thermophilum (strain DSM 1495 / CBS 144.50 / IMI 039719) (Thermochaetoides thermophila)).